The chain runs to 579 residues: Type IV pilus assembly ATPase PilB (579 aa).

340 to 345 (GSGKTV) is a binding site for ATP. Residues Cys-470, Cys-473, Cys-507, and Cys-510 each coordinate Zn(2+).

Belongs to the GSP E family. As to quaternary structure, interacts with CpiA.

Its subcellular location is the cytoplasm. Inhibited by the inhibitory protein CpiA. In terms of biological role, ATPase component of the type IV pilus (T4P). Acts as a molecular motor to provide the energy that is required for biogenesis of the pilus and the extrusion of substrates generated in the cytoplasm. PilB is required for optimal T4P extension and, consequently, efficient natural transformation. May promote processive T4P extension. The polypeptide is Type IV pilus assembly ATPase PilB (Acinetobacter baylyi (strain ATCC 33305 / BD413 / ADP1)).